Consider the following 303-residue polypeptide: Probable RuBisCO transcriptional regulator (303 aa).

An HTH lysR-type domain is found at 6–63 (FTLDQLRIFQAIVVEGSFQKAAQSLYISQPAVSLQIQNLEQQLNAPLFDRSHRKAKLT). The H-T-H motif DNA-binding region spans 23 to 42 (FQKAAQSLYISQPAVSLQIQ).

This sequence belongs to the LysR transcriptional regulatory family.

It localises to the plastid. It is found in the chloroplast. Its function is as follows. Trans-acting transcriptional regulator of RuBisCO genes (rbcL and rbcS) expression. In Cyanidioschyzon merolae (strain NIES-3377 / 10D) (Unicellular red alga), this protein is Probable RuBisCO transcriptional regulator (rbcR).